Reading from the N-terminus, the 29-residue chain is Cyclotide vibi-A (29 aa).

Positions 1 to 29 (GLPVCGETCFGGTCNTPGCSCSYPICTRN) form a cross-link, cyclopeptide (Gly-Asn). 3 disulfide bridges follow: cysteine 5–cysteine 19, cysteine 9–cysteine 21, and cysteine 14–cysteine 26.

This is a cyclic peptide.

Probably participates in a plant defense mechanism. This chain is Cyclotide vibi-A, found in Viola biflora (Yellow wood violet).